A 551-amino-acid polypeptide reads, in one-letter code: Rhodopsin kinase grk7-a (551 aa).

Position 36 is a phosphoserine (Ser36). In terms of domain architecture, RGS spans Tyr57–Leu174. The 263-residue stretch at Phe189 to Phe451 folds into the Protein kinase domain. Residues Leu195–Val203 and Lys218 each bind ATP. Asp314 serves as the catalytic Proton acceptor. Residues Lys452–Glu517 enclose the AGC-kinase C-terminal domain. Phosphoserine is present on Ser487. Positions Asp529–Leu551 are disordered. The segment covering Gly542 to Leu551 has biased composition (low complexity). At Cys548 the chain carries Cysteine methyl ester. Cys548 carries the S-geranylgeranyl cysteine lipid modification. Positions Ser549–Leu551 are cleaved as a propeptide — removed in mature form.

This sequence belongs to the protein kinase superfamily. AGC Ser/Thr protein kinase family. GPRK subfamily. Autophosphorylated in vitro at Ser-487. Phosphorylation at Ser-36 is regulated by light and activated by cAMP.

The protein localises to the membrane. The catalysed reaction is L-threonyl-[rhodopsin] + ATP = O-phospho-L-threonyl-[rhodopsin] + ADP + H(+). It carries out the reaction L-seryl-[rhodopsin] + ATP = O-phospho-L-seryl-[rhodopsin] + ADP + H(+). Its function is as follows. Retina-specific kinase involved in the shutoff of the photoresponse and adaptation to changing light conditions via cone opsin phosphorylation, including rhodopsin (RHO). This chain is Rhodopsin kinase grk7-a (grk7-a), found in Xenopus laevis (African clawed frog).